Reading from the N-terminus, the 1326-residue chain is Putative late blight resistance protein homolog R1B-19 (1326 aa).

Coiled coils occupy residues 421-444 and 536-558; these read RYSD…ESLQ and PRMK…KLLN. 570–577 contacts ATP; sequence GMPGLGKT. Residues 611 to 864 enclose the NB-ARC domain; it reads LLSLLCDTIG…KVKTCRLHDV (254 aa). The stretch at 749-770 forms a coiled coil; that stretch reads SEMEKEVECWEQVANNLGTRIH. LRR repeat units lie at residues 953–978, 980–996, 1027–1050, 1053–1070, 1071–1094, 1098–1118, 1119–1146, 1167–1191, and 1208–1230; these read FKFL…VYLK, FSAH…IYNL, LRHL…SAKL, LETL…LNFP, IRLE…ISAP, YLKL…ADHL, KNLE…MFPQ, FPNL…AMNI, and LIEK…AFKR. Residues 1209 to 1278 enclose the HMA domain; sequence IEKKTLKLNL…AWHARVVVPT (70 aa).

Belongs to the disease resistance NB-LRR family.

It localises to the cytoplasm. Its subcellular location is the membrane. Functionally, confers resistance to late blight (Phytophthora infestans) races carrying the avirulence gene Avr1. Resistance proteins guard the plant against pathogens that contain an appropriate avirulence protein via an indirect interaction with this avirulence protein. That triggers a defense system including the hypersensitive response, which restricts the pathogen growth. This is Putative late blight resistance protein homolog R1B-19 (R1B-19) from Solanum demissum (Wild potato).